We begin with the raw amino-acid sequence, 541 residues long: Zinc finger protein 329 (541 aa).

Residue Ser-50 is modified to Phosphoserine. C2H2-type zinc fingers lie at residues 203–225 (YRCTECGKCFKRNSSLVLHHRTH), 231–253 (YTCNECGKSFSKNYNLIVHQRIH), 259–281 (YECSKCGKAFSDGSALTQHQRIH), 287–309 (YECLECGKTFNRNSSLILHQRTH), 315–337 (YRCNECGKPFTDISHLTVHLRIH), 343–365 (YECSKCGKAFRDGSYLTQHERTH), 371–393 (FECAECGKSFNRNSHLIVHQKIH), 399–421 (YECKECGKTFIESAYLIRHQRIH), 427–449 (YGCNQCQKLFRNIAGLIRHQRTH), 455–477 (YECNQCGKAFRDSSCLTKHQRIH), 483–505 (YQCPECGKSFKQNSHLAVHQRLH), and 511–533 (SRCPQCGKMFQKSSSLVRHQRAH).

The protein belongs to the krueppel C2H2-type zinc-finger protein family.

The protein resides in the nucleus. Functionally, may be involved in transcriptional regulation. The polypeptide is Zinc finger protein 329 (ZNF329) (Homo sapiens (Human)).